The following is a 231-amino-acid chain: Large ribosomal subunit protein uL1 (231 aa).

Belongs to the universal ribosomal protein uL1 family. As to quaternary structure, part of the 50S ribosomal subunit.

Binds directly to 23S rRNA. The L1 stalk is quite mobile in the ribosome, and is involved in E site tRNA release. Functionally, protein L1 is also a translational repressor protein, it controls the translation of the L11 operon by binding to its mRNA. The chain is Large ribosomal subunit protein uL1 from Nitrosococcus oceani (strain ATCC 19707 / BCRC 17464 / JCM 30415 / NCIMB 11848 / C-107).